The primary structure comprises 40 residues: Photosystem II reaction center protein J (40 aa).

The chain crosses the membrane as a helical span at residues 8–28; sequence IPLWLIGTVAGIPVIGSVGVF.

The protein belongs to the PsbJ family. PSII is composed of 1 copy each of membrane proteins PsbA, PsbB, PsbC, PsbD, PsbE, PsbF, PsbH, PsbI, PsbJ, PsbK, PsbL, PsbM, PsbT, PsbX, PsbY, PsbZ, Psb30/Ycf12, at least 3 peripheral proteins of the oxygen-evolving complex and a large number of cofactors. It forms dimeric complexes.

The protein resides in the plastid. It is found in the chloroplast thylakoid membrane. Its function is as follows. One of the components of the core complex of photosystem II (PSII). PSII is a light-driven water:plastoquinone oxidoreductase that uses light energy to abstract electrons from H(2)O, generating O(2) and a proton gradient subsequently used for ATP formation. It consists of a core antenna complex that captures photons, and an electron transfer chain that converts photonic excitation into a charge separation. This is Photosystem II reaction center protein J from Acorus calamus (Sweet flag).